The primary structure comprises 585 residues: T-cell surface protein tactile (585 aa).

Positions 1-21 (MEKKWKYCAVYYIIQIHFVKG) are cleaved as a signal peptide. Residues 22–519 (VWEKTVNTEE…IVVNKPKDGM (498 aa)) lie on the Extracellular side of the membrane. The region spanning 38-125 (GSDVNLTCQT…YECMLVLYPE (88 aa)) is the Ig-like V-type 1 domain. N42, N97, N107, N148, N156, N166, N200, N215, N277, N278, N300, N350, and N368 each carry an N-linked (GlcNAc...) asparagine glycan. C45 and C118 form a disulfide bridge. Positions 156–238 (NQTLEIPCFQ…YRLHLSPVQI (83 aa)) constitute an Ig-like V-type 2 domain. Residues C163 and C247 are joined by a disulfide bond. One can recognise an Ig-like C2-type domain in the interval 269 to 375 (PEIPVIVENN…VWNISSEKIT (107 aa)). Cysteines 290 and 355 form a disulfide. 3 stretches are compositionally biased toward polar residues: residues 385–418 (TDPP…SSVT), 426–452 (RPNT…SSGT), and 460–475 (RIPS…GAGS). Residues 385-475 (TDPPLSVTES…YSSSPSGAGS (91 aa)) form a disordered region. The N-linked (GlcNAc...) asparagine glycan is linked to N435. A glycan (N-linked (GlcNAc...) asparagine) is linked at N497. The chain crosses the membrane as a helical span at residues 520 to 540 (SWPVIVAALLFCCMILFGLGV). Topologically, residues 541 to 585 (RKWCQYQKEIMERPPPFKPPPPPIKYTCIQEPNESDLPYHEMETL) are cytoplasmic.

In terms of assembly, homodimer; disulfide-linked. Interacts with PVR. As to expression, expressed on normal T-cell lines and clones, and some transformed T-cells, but no other cultured cell lines tested. It is expressed at very low levels on activated B-cells.

The protein resides in the membrane. Its function is as follows. May be involved in adhesive interactions of activated T and NK cells during the late phase of the immune response. Promotes NK cell-target adhesion by interacting with PVR present on target cells. May function at a time after T and NK cells have penetrated the endothelium using integrins and selectins, when they are actively engaging diseased cells and moving within areas of inflammation. The sequence is that of T-cell surface protein tactile (CD96) from Homo sapiens (Human).